Consider the following 725-residue polypeptide: MDGNDIRSTGKCPVMHGGNTAMGSSVTAWWPNALNLDILHQHDSKTNPLGQDFNYSEELKKLDVEALKADLRALMTDSQDWWPADWGSYVGMFARTAWHMAGSYRTSDGRGGANTGNQRFAPLNSWPDNVNTDKGRRLLWPIKKKYGNKISWADLIVLAGTVAYEAAGLKTYGFAFGREDIWHPEKDTYWGEEKEWLAPSDSRYGDVTKAETLANPLAAVQMGLIYVNPEGVNGKSDPQATAYQMRETFARMGMNDEETVALTAGGHTVGKCHGNGNVTDLSPDPEAAGPEFQGLGWMNTKGRGIGRNTMVSGLEGAWTTHPTQWDNGFFEMLFKHEWTLTHSPAGASQWEPITIAEEDKPADVEDPSIRHMPMMTDADMALKVDPIYREISLRFMNDFEAFSDAFARAWFKLTHRDMGPKARYLGPDVPAEDLVWQDPIPAGRSDYDVAAVKARIAASGLSASDLVATAWDSARTYRGSDHRGGANGARIRLAPQKDWEGNEPQRLARVLSVLEPIAAETGASLADVIVLGGNLGVEQAAKAAGFDIEVPFAPGRGDSTAEQTDAASFDVLEPLADGFRNWQKQDYVVSPEEMLLDRAQLMGLTAPEMTTLIGGLRVIGTNHGGTKHGVFTQRKGALTNDFFVTLTDMANNWVPVGNNLYEIRDRKTGATRYTATRVDLVFGSNSILRAYAEVYAQDDNAGKFVRDFVAAWTKVMNADRFDLAA.

A cross-link (tryptophyl-tyrosyl-methioninium (Trp-Tyr) (with M-252)) is located at residues 98-226 (WHMAGSYRTS…LAAVQMGLIY (129 aa)). His99 functions as the Proton acceptor in the catalytic mechanism. A cross-link (tryptophyl-tyrosyl-methioninium (Tyr-Met) (with W-98)) is located at residues 226-252 (YVNPEGVNGKSDPQATAYQMRETFARM). Position 267 (His267) interacts with heme b.

Belongs to the peroxidase family. Peroxidase/catalase subfamily. Homodimer or homotetramer. It depends on heme b as a cofactor. In terms of processing, formation of the three residue Trp-Tyr-Met cross-link is important for the catalase, but not the peroxidase activity of the enzyme.

The enzyme catalyses H2O2 + AH2 = A + 2 H2O. It carries out the reaction 2 H2O2 = O2 + 2 H2O. Bifunctional enzyme with both catalase and broad-spectrum peroxidase activity. The polypeptide is Catalase-peroxidase (Paracoccus denitrificans (strain Pd 1222)).